We begin with the raw amino-acid sequence, 248 residues long: GPN-loop GTPase PAB0955 (248 aa).

Residue 10-15 participates in GTP binding; it reads GSGKTT. Positions 65–67 match the Gly-Pro-Asn (GPN)-loop; involved in dimer interface motif; it reads GPN. GTP is bound by residues 165-168 and A224; that span reads NKVD.

Belongs to the GPN-loop GTPase family. As to quaternary structure, homodimer. Interacts with DNA topoisomerase VI subunit B (top6B), DNA primase DnaG and RF-C.

In terms of biological role, small GTPase that may be involved in genome maintenance. Has weak intrinsic GTPase activity but displays no ATPase activity. The chain is GPN-loop GTPase PAB0955 from Pyrococcus abyssi (strain GE5 / Orsay).